A 383-amino-acid polypeptide reads, in one-letter code: Cathepsin D (383 aa).

The N-terminal stretch at 1–18 (MKLLILTLFLATIVLAQA) is a signal peptide. The propeptide occupies 19-48 (LTVPLNFHQASRESRRRVPQKWSNRLSALN). One can recognise a Peptidase A1 domain in the interval 63–378 (YYGAITIGTP…DFGNKQVGFA (316 aa)). The active site involves aspartate 81. Cysteine 94 and cysteine 101 are disulfide-bonded. Asparagine 118 and asparagine 238 each carry an N-linked (GlcNAc...) asparagine glycan. An intrachain disulfide couples cysteine 259 to cysteine 263. Aspartate 268 is a catalytic residue. A disulfide bond links cysteine 302 and cysteine 339. An N-linked (GlcNAc...) asparagine glycan is attached at asparagine 310.

The protein belongs to the peptidase A1 family. Monomer. In terms of processing, N-glycosylated on 2 out of the 3 potential sites. Glycans contain sulfated Mannose.

It is found in the lysosome. It localises to the secreted. The enzyme catalyses Specificity similar to, but narrower than, that of pepsin A. Does not cleave the 4-Gln-|-His-5 bond in B chain of insulin.. Functionally, protease that may act during cell growth and/or development. The chain is Cathepsin D (ctsD) from Dictyostelium discoideum (Social amoeba).